The primary structure comprises 437 residues: tRNA(Ile2) 2-agmatinylcytidine synthetase TiaS (437 aa).

Belongs to the TiaS family.

It is found in the cytoplasm. It carries out the reaction cytidine(34) in tRNA(Ile2) + agmatine + ATP + H2O = 2-agmatinylcytidine(34) in tRNA(Ile2) + AMP + 2 phosphate + 2 H(+). Functionally, ATP-dependent agmatine transferase that catalyzes the formation of 2-agmatinylcytidine (agm2C) at the wobble position (C34) of tRNA(Ile2), converting the codon specificity from AUG to AUA. This chain is tRNA(Ile2) 2-agmatinylcytidine synthetase TiaS, found in Thermoplasma volcanium (strain ATCC 51530 / DSM 4299 / JCM 9571 / NBRC 15438 / GSS1).